We begin with the raw amino-acid sequence, 86 residues long: Small ribosomal subunit protein bS20 (86 aa).

It belongs to the bacterial ribosomal protein bS20 family.

Its function is as follows. Binds directly to 16S ribosomal RNA. The polypeptide is Small ribosomal subunit protein bS20 (Oceanobacillus iheyensis (strain DSM 14371 / CIP 107618 / JCM 11309 / KCTC 3954 / HTE831)).